Here is a 1032-residue protein sequence, read N- to C-terminus: Serine/threonine-protein kinase ppk31 (1032 aa).

One can recognise a PAS domain in the interval 3–72 (NPEQLKRILS…KATDNLFRKS (70 aa)). In terms of domain architecture, Protein kinase spans 528 to 877 (FILLKEINRG…YQEIKKHPFF (350 aa)). Residues 534–542 (INRGAYGRV) and Lys557 contribute to the ATP site. Asp652 serves as the catalytic Proton acceptor. The disordered stretch occupies residues 938-963 (PKATPADSGTETSNSAAFSASEEETT). A compositionally biased stretch (low complexity) spans 947 to 957 (TETSNSAAFSA).

It belongs to the protein kinase superfamily. Ser/Thr protein kinase family.

It localises to the cytoplasm. The enzyme catalyses L-seryl-[protein] + ATP = O-phospho-L-seryl-[protein] + ADP + H(+). It carries out the reaction L-threonyl-[protein] + ATP = O-phospho-L-threonyl-[protein] + ADP + H(+). Has a role in meiosis. The polypeptide is Serine/threonine-protein kinase ppk31 (ppk31) (Schizosaccharomyces pombe (strain 972 / ATCC 24843) (Fission yeast)).